A 244-amino-acid chain; its full sequence is Small ribosomal subunit protein uS2 (244 aa).

This sequence belongs to the universal ribosomal protein uS2 family.

The polypeptide is Small ribosomal subunit protein uS2 (Desulforudis audaxviator (strain MP104C)).